The sequence spans 165 residues: Large ribosomal subunit protein uL10 (165 aa).

It belongs to the universal ribosomal protein uL10 family. In terms of assembly, part of the ribosomal stalk of the 50S ribosomal subunit. The N-terminus interacts with L11 and the large rRNA to form the base of the stalk. The C-terminus forms an elongated spine to which L12 dimers bind in a sequential fashion forming a multimeric L10(L12)X complex.

Forms part of the ribosomal stalk, playing a central role in the interaction of the ribosome with GTP-bound translation factors. This Burkholderia ambifaria (strain MC40-6) protein is Large ribosomal subunit protein uL10.